A 246-amino-acid chain; its full sequence is uncharacterized protein (246 aa).

The tract at residues 120 to 149 (EKCAGETSPYTSASVSNSKKATSSSNFTKS) is disordered. Over residues 130–149 (TSASVSNSKKATSSSNFTKS) the composition is skewed to low complexity.

This is an uncharacterized protein from Caenorhabditis elegans.